We begin with the raw amino-acid sequence, 318 residues long: MITDLILHNHPRMKTITLNDNHIAHLNAKNTTKLEYLNLSNNNLLPTNDIDQLISSKHLWHVLVNGINNDPLAQMQYWTAVRNIIDDTNEVTIDLSGLNLTTQPPGLQNFTSINLDNNQFTHFDATNYDRLVKLSLNSNALESINFPQGRNVSITHISMNNNALRNIDIDRLSSVTYFSAAHNQLEFVQLESCEWLQYLNLSHNQLTDIVAGNKNELLLLDLSHNKLTSLHNDLFPNLNTLLINNNLLSEIKIFYSNFCNVQTLNAANNQLKYINLDFLTYLPSIKSLRLDNNKITHIDTNNTSDIGTLFPIIKQSKT.

9 LRR repeats span residues 109–129, 130–151, 153–173, 174–194, 195–216, 217–237, 238–258, 260–280, and 284–305; these read NFTSINLDNNQFTHFDATNYD, RLVKLSLNSNALESINFPQGRN, SITHISMNNNALRNIDIDRLS, SVTYFSAAHNQLEFVQLESCE, WLQYLNLSHNQLTDIVAGNKNE, LLLLDLSHNKLTSLHNDLFPN, LNTLLINNNLLSEIKIFYSNF, NVQTLNAANNQLKYINLDFLT, and SIKSLRLDNNKITHIDTNNTSD.

This is Leucine-rich repeat domain-containing protein YddK (yddK) from Escherichia coli (strain K12).